Consider the following 233-residue polypeptide: Probable septum site-determining protein MinC (233 aa).

Belongs to the MinC family. Interacts with MinD and FtsZ.

In terms of biological role, cell division inhibitor that blocks the formation of polar Z ring septums. Rapidly oscillates between the poles of the cell to destabilize FtsZ filaments that have formed before they mature into polar Z rings. Prevents FtsZ polymerization. This Proteus mirabilis (strain HI4320) protein is Probable septum site-determining protein MinC.